The chain runs to 514 residues: Putative GTP-binding protein 6 (514 aa).

Positions 48-71 (WAGGGPVRGGGEEDPREDEEEEED) are disordered. A compositionally biased stretch (acidic residues) spans 59–71 (EEDPREDEEEEED). Residues 285 to 449 (PVVSVVGYTN…ALEASVLRAT (165 aa)) enclose the Hflx-type G domain. 2 residues coordinate Mg(2+): threonine 298 and threonine 319.

It belongs to the TRAFAC class OBG-HflX-like GTPase superfamily. HflX GTPase family. The cofactor is Mg(2+).

In Mus musculus (Mouse), this protein is Putative GTP-binding protein 6 (Gtpbp6).